The primary structure comprises 765 residues: Probable dipeptidyl peptidase 4 (765 aa).

The first 14 residues, 1 to 14 (MKWSILLLVGCAAA), serve as a signal peptide directing secretion. Residues Asn-35, Asn-78, Asn-101, Asn-110, Asn-169, Asn-218, Asn-465, and Asn-490 are each glycosylated (N-linked (GlcNAc...) asparagine). Ser-613 functions as the Charge relay system in the catalytic mechanism. Asn-665 carries N-linked (GlcNAc...) asparagine glycosylation. Residues Asp-690 and His-725 each act as charge relay system in the active site.

This sequence belongs to the peptidase S9B family.

The protein resides in the secreted. It catalyses the reaction Release of an N-terminal dipeptide, Xaa-Yaa-|-Zaa-, from a polypeptide, preferentially when Yaa is Pro, provided Zaa is neither Pro nor hydroxyproline.. In terms of biological role, extracellular dipeptidyl-peptidase which removes N-terminal dipeptides sequentially from polypeptides having unsubstituted N-termini provided that the penultimate residue is proline. The protein is Probable dipeptidyl peptidase 4 (dpp4) of Neosartorya fischeri (strain ATCC 1020 / DSM 3700 / CBS 544.65 / FGSC A1164 / JCM 1740 / NRRL 181 / WB 181) (Aspergillus fischerianus).